We begin with the raw amino-acid sequence, 417 residues long: Leucine-rich repeat-containing protein 42 (417 aa).

LRR repeat units follow at residues 167–188 (CLRSLDLSCCKLGDEHELLEHL), 195–215 (SLTELYLKDNCFSDTGIRKMT), 227–249 (ALKVLDLSSNPGITDRGVLFLFG), and 252–273 (LLQFLDLSDTSIQDRSRTVKKI). The disordered stretch occupies residues 360–399 (FFRPEEQKDSDSSKSDKRQRSTKRTGADPGQEDCTIAPAT). Over residues 362–378 (RPEEQKDSDSSKSDKRQ) the composition is skewed to basic and acidic residues.

It belongs to the LRRC42 family.

The sequence is that of Leucine-rich repeat-containing protein 42 (lrrc42) from Xenopus tropicalis (Western clawed frog).